A 344-amino-acid polypeptide reads, in one-letter code: MTCLTLALDAMGGDFGPHVTVPASLQALASNPKLKLLLVGNPDTITSLLVNADPLLLERLQVIPAEHVIAGDAKPSQAIRASRGTSMRIALELVKNGDAAACVSAGNTGALMGLAKMMIKPLDGIERPALMTVIPNQQRSKTVVLDLGANVECDSTMLVQFAVMGSVMAEEVVGITNPRVALLNIGEEETKGLDNIREAAAVLKNTPTINYIGYLEGNDLLTGKTDVMVCDGFVGNVTLKTMEGVIRMFLSLLKSSGEGKKQSWWLKLIGRWLQKRVAKRFGHLNPDQYNGACLLGLRGIVIKSHGAANQRAFAVAIEQAVQAVQRQVPQRIAARLEAVLPKSD.

The protein belongs to the PlsX family. As to quaternary structure, homodimer. Probably interacts with PlsY.

It localises to the cytoplasm. The catalysed reaction is a fatty acyl-[ACP] + phosphate = an acyl phosphate + holo-[ACP]. It participates in lipid metabolism; phospholipid metabolism. Catalyzes the reversible formation of acyl-phosphate (acyl-PO(4)) from acyl-[acyl-carrier-protein] (acyl-ACP). This enzyme utilizes acyl-ACP as fatty acyl donor, but not acyl-CoA. The sequence is that of Phosphate acyltransferase from Yersinia enterocolitica serotype O:8 / biotype 1B (strain NCTC 13174 / 8081).